We begin with the raw amino-acid sequence, 587 residues long: DELLA protein GAIP-B (587 aa).

Residues 1-23 form a disordered region; that stretch reads MKREHHHLHPRPDPPSMAAAPNG. The short motif at 46–50 is the DELLA motif element; sequence DELLA. The GRAS domain maps to 209–577; that stretch reads VDSQENGIQL…RPLIVTSAWK (369 aa). A leucine repeat I (LRI) region spans residues 216-270; it reads IQLVHALMACAEAVQQNNLNLAEALEKRIGYLAVSQAGAMRKVATFFAEALARRI. The VHIID stretch occupies residues 288-353; that stretch reads QLHFYESSPY…SGPPAFRLTG (66 aa). The short motif at 319–323 is the VHIID element; sequence VHVID. Residues 367-399 are leucine repeat II (LRII); that stretch reads DVGWKLAKLVETINVEFEYRGFVANSLADLDAS. The PFYRE stretch occupies residues 411 to 498; the sequence is VVVNSVFELH…EMYLGKQICN (88 aa). The short motif at 419–423 is the LXXLL motif element; it reads LHKLL. Positions 501–577 are SAW; it reads ACEGSDRVEW…RPLIVTSAWK (77 aa).

This sequence belongs to the GRAS family. DELLA subfamily. Post-translationally, phosphorylated. In terms of processing, ubiquitinated. Upon GA application it is ubiquitinated, leading to its subsequent degradation.

The protein resides in the nucleus. Probable transcriptional regulator that acts as a repressor of the gibberellin (GA) signaling pathway. Probably acts by participating in large multiprotein complexes that represses transcription of GA-inducible genes. Upon GA application, it is degraded by the proteasome, allowing the GA signaling pathway. The protein is DELLA protein GAIP-B (GAIPB) of Cucurbita maxima (Pumpkin).